The sequence spans 217 residues: Uracil-DNA glycosylase (217 aa).

The active-site Proton acceptor is aspartate 62.

Belongs to the uracil-DNA glycosylase (UDG) superfamily. UNG family.

It localises to the cytoplasm. The catalysed reaction is Hydrolyzes single-stranded DNA or mismatched double-stranded DNA and polynucleotides, releasing free uracil.. Functionally, excises uracil residues from the DNA which can arise as a result of misincorporation of dUMP residues by DNA polymerase or due to deamination of cytosine. The chain is Uracil-DNA glycosylase from Streptococcus gordonii (strain Challis / ATCC 35105 / BCRC 15272 / CH1 / DL1 / V288).